A 189-amino-acid chain; its full sequence is UPF0688 protein C1orf174 homolog (189 aa).

The segment at 53 to 137 is disordered; the sequence is QMAGDGGEAK…TTDPSVFFDE (85 aa). Composition is skewed to basic and acidic residues over residues 59–73 and 93–103; these read GEAK…HGEV and APGERRGKENS.

The protein belongs to the UPF0688 family.

Its subcellular location is the nucleus. In Danio rerio (Zebrafish), this protein is UPF0688 protein C1orf174 homolog.